The following is a 95-amino-acid chain: Small ribosomal subunit protein bS6 (95 aa).

The protein belongs to the bacterial ribosomal protein bS6 family.

Its function is as follows. Binds together with bS18 to 16S ribosomal RNA. The chain is Small ribosomal subunit protein bS6 from Oceanobacillus iheyensis (strain DSM 14371 / CIP 107618 / JCM 11309 / KCTC 3954 / HTE831).